The primary structure comprises 192 residues: Ribosome hibernation promotion factor (192 aa).

Residues 95-129 are disordered; sequence RVNRKHKTHGEPEAFVAEVQEAPPENVDDVNAEPT. The span at 120 to 129 shows a compositional bias: acidic residues; the sequence is NVDDVNAEPT.

This sequence belongs to the HPF/YfiA ribosome-associated protein family. Long HPF subfamily. As to quaternary structure, interacts with 100S ribosomes.

It is found in the cytoplasm. Required for dimerization of active 70S ribosomes into 100S ribosomes in stationary phase; 100S ribosomes are translationally inactive and sometimes present during exponential growth. This Staphylococcus haemolyticus (strain JCSC1435) protein is Ribosome hibernation promotion factor.